Reading from the N-terminus, the 1095-residue chain is Inactive phospholipase C-like protein 1 (1095 aa).

Residues 1–11 (MAEGAAGREDP) are compositionally biased toward basic and acidic residues. A disordered region spans residues 1-61 (MAEGAAGRED…PGAAGTPADS (61 aa)). Residues Ser47 and Ser77 each carry the phosphoserine modification. Residues 83–222 (SNQKCGGRKK…IWVSGLRYLV (140 aa)) form an interaction with PPP1C region. Thr93 bears the Phosphothreonine; by PKA mark. Ser95 carries the post-translational modification Phosphoserine. The region spanning 113 to 223 (SFMQAGCELK…WVSGLRYLVS (111 aa)) is the PH domain. The 145-residue stretch at 398–542 (QDMTQPLSHY…LKRMIIVKGK (145 aa)) folds into the PI-PLC X-box domain. The interval 543-567 (KLPSDPDVLEGEVTDEDEEAEMSRR) is interaction with GABA A beta subunit. Thr556 bears the Phosphothreonine mark. Phosphoserine is present on Ser569. The PI-PLC Y-box domain maps to 585–701 (LSDLVSICKS…GYVLRPSIMR (117 aa)). The region spanning 701–830 (RDEVSYFSAN…PGYRHVPLRS (130 aa)) is the C2 domain. Coiled-coil stretches lie at residues 894 to 914 (LREAIDMRENMQNAIVSIKEL) and 1034 to 1059 (LKGQGDLLKNAKNEAIENMKQIQLAC). The segment at 1066–1095 (KAPSSSAEAKSKRSLEAIEEKESSEENGKL) is disordered. Positions 1074 to 1095 (AKSKRSLEAIEEKESSEENGKL) are enriched in basic and acidic residues. Residue Ser1079 is modified to Phosphoserine.

As to quaternary structure, interacts with PPP2CA. Interacts with Ins(1,4,5)P3, Ins(1,4,5,6)P4, GABARAP, GABA receptor beta subunits, GABA receptor gamma-2 subunits and PPP1C. May form a ternary complex with GABA receptor beta subunit and GABARAP. The formation of a ternary complex with GABA receptor beta subunit and GABARAP could be the key step for facilitating the association of GABARAP with the GABA receptor gamma-2 subunit and to allow it to be transported at the right destination. Phosphorylated by the catalytic subunit of PKA. Phosphorylation of Thr-93 resulted in dissociation of PPP1C from PRIP1. As to expression, expressed in a variety of fetal and adult organs including brain, lung and kidney. Its expression was greatly reduced in small and non-small cell lung carcinoma. Isoform 1 is predominantly expressed in brain.

It localises to the cytoplasm. Its function is as follows. Involved in an inositol phospholipid-based intracellular signaling cascade. Shows no PLC activity to phosphatidylinositol 4,5-bisphosphate and phosphatidylinositol. Component in the phospho-dependent endocytosis process of GABA A receptor. Regulates the turnover of receptors and thus contributes to the maintenance of GABA-mediated synaptic inhibition. Its aberrant expression could contribute to the genesis and progression of lung carcinoma. Acts as an inhibitor of PPP1C. The chain is Inactive phospholipase C-like protein 1 (PLCL1) from Homo sapiens (Human).